The following is a 283-amino-acid chain: Thymidylate synthase (283 aa).

Arginine 22 serves as a coordination point for dUMP. Cysteine 160 (nucleophile) is an active-site residue. DUMP is bound by residues 180–183 (RSCD), asparagine 191, and 221–223 (HIY). Aspartate 183 is a binding site for (6R)-5,10-methylene-5,6,7,8-tetrahydrofolate. Serine 282 is a (6R)-5,10-methylene-5,6,7,8-tetrahydrofolate binding site.

Belongs to the thymidylate synthase family. Bacterial-type ThyA subfamily. Homodimer.

The protein resides in the cytoplasm. It catalyses the reaction dUMP + (6R)-5,10-methylene-5,6,7,8-tetrahydrofolate = 7,8-dihydrofolate + dTMP. Its pathway is pyrimidine metabolism; dTTP biosynthesis. Functionally, catalyzes the reductive methylation of 2'-deoxyuridine-5'-monophosphate (dUMP) to 2'-deoxythymidine-5'-monophosphate (dTMP) while utilizing 5,10-methylenetetrahydrofolate (mTHF) as the methyl donor and reductant in the reaction, yielding dihydrofolate (DHF) as a by-product. This enzymatic reaction provides an intracellular de novo source of dTMP, an essential precursor for DNA biosynthesis. In Shewanella halifaxensis (strain HAW-EB4), this protein is Thymidylate synthase.